The sequence spans 211 residues: Redox-sensing transcriptional repressor Rex (211 aa).

Positions 18-57 (LYYRFLENLHASGKQRVSSSELSEAVKVDSATIRRDFSYF) form a DNA-binding region, H-T-H motif. 92-97 (GVGNLG) is a binding site for NAD(+).

The protein belongs to the transcriptional regulatory Rex family. In terms of assembly, homodimer.

The protein resides in the cytoplasm. Functionally, modulates transcription in response to changes in cellular NADH/NAD(+) redox state. The polypeptide is Redox-sensing transcriptional repressor Rex (Halalkalibacterium halodurans (strain ATCC BAA-125 / DSM 18197 / FERM 7344 / JCM 9153 / C-125) (Bacillus halodurans)).